A 249-amino-acid chain; its full sequence is Basic leucine zipper 23 (249 aa).

A disordered region spans residues 66–90; that stretch reads KVSTDDTSESSGKKRPLGNREAVRK. The bZIP domain maps to 74-121; that stretch reads ESSGKKRPLGNREAVRKYREKKKAKAASLEDEVMRLKAVNNQLLKRLQ. Residues 78–98 are basic motif; the sequence is KKRPLGNREAVRKYREKKKAK. The interval 102–116 is leucine-zipper; it reads LEDEVMRLKAVNNQL.

The protein resides in the nucleus. Its function is as follows. Transcription factor involved in the response to zinc ion deficiency. Binds to the consensus sequence 5'-[AG]TGTCGACA[CT]-3' also called zinc deficiency response element (ZDRE). The ZDRE sequence is conserved in the plant kingdom and present in the promoters of genes that constitute the primary response to zinc deficiency, comprising additional ZIP metal transporter genes. Required for zinc accumulation in roots. Mediates the expression of the zinc transporter ZIP12 during growth in zinc-deficient conditions. ZIP12 transporter is involved in zinc uptake in roots. This chain is Basic leucine zipper 23, found in Arabidopsis thaliana (Mouse-ear cress).